The sequence spans 448 residues: MSRRYFGTDGIRGRANGLITPELAMKVGQAAGLVFQRGEHRHRVVIGKDTRLSGYMIEYALVAGFTSVGMDVLLLGPMPTPAVAMLTKSMRADLGVMISASHNLFEDNGIKMFGPRGFKLSDEVEKKIEKLLDENLDKKLAQSRNLGRARRIDGVHDRYIEFAKRTLPRELSLEGLRVVVDCAHGAAYKVVPEALWELGADVVPIGVEPDGLNINKECGSTAPEALCRKVREMRGDIGIALDGDADRVIIVDERGHVVDGDQLLAVIAESWKEDGRLTKPGIVATVMSNLGLERFLKDRDLSLVRTPVGDRYVLEQMLKQGYNLGGEQSGHIILSDYATTGDGFVSALQVLAVVQKLGRPVSQVCHKFEPLPQILKNFRYRNGKPLDRAEVKSAITAGEKRLNGHGRLLVRSSGTEPVIRVMGEGDDRILVEEVVDTIVSALGNPAVA.

Ser-101 acts as the Phosphoserine intermediate in catalysis. 4 residues coordinate Mg(2+): Ser-101, Asp-242, Asp-244, and Asp-246. Ser-101 is subject to Phosphoserine.

Belongs to the phosphohexose mutase family. Mg(2+) is required as a cofactor. Post-translationally, activated by phosphorylation.

The enzyme catalyses alpha-D-glucosamine 1-phosphate = D-glucosamine 6-phosphate. Its function is as follows. Catalyzes the conversion of glucosamine-6-phosphate to glucosamine-1-phosphate. The protein is Phosphoglucosamine mutase of Nitrobacter winogradskyi (strain ATCC 25391 / DSM 10237 / CIP 104748 / NCIMB 11846 / Nb-255).